The following is a 59-amino-acid chain: Cecropin-B2 (59 aa).

The first 23 residues, 1–23 (MNFNKLFLIVILAALLLLGQTEA), serve as a signal peptide directing secretion. Leucine 57 bears the Leucine amide mark.

It belongs to the cecropin family.

The protein localises to the secreted. In terms of biological role, cecropins have lytic and antibacterial activity against several Gram-positive and Gram-negative bacteria. This chain is Cecropin-B2 (CECB2), found in Culex pipiens pipiens (Northern house mosquito).